A 21-amino-acid chain; its full sequence is Fibrinogen beta chain (21 aa).

The residue at position 1 (Gln1) is a Pyrrolidone carboxylic acid. A compositionally biased stretch (acidic residues) spans 1–11 (QFPTDYDEGED). Residues 1-21 (QFPTDYDEGEDDRPKSGLGAR) form a disordered region. The O-linked (GalNAc...) threonine glycan is linked to Thr4. Tyr6 bears the Sulfotyrosine mark.

Heterohexamer; disulfide linked. Contains 2 sets of 3 non-identical chains (alpha, beta and gamma). The 2 heterotrimers are in head to head conformation with the N-termini in a small central domain. Conversion of fibrinogen to fibrin is triggered by thrombin, which cleaves fibrinopeptides A and B from alpha and beta chains, and thus exposes the N-terminal polymerization sites responsible for the formation of the soft clot.

It localises to the secreted. Cleaved by the protease thrombin to yield monomers which, together with fibrinogen alpha (FGA) and fibrinogen gamma (FGG), polymerize to form an insoluble fibrin matrix. Fibrin has a major function in hemostasis as one of the primary components of blood clots. In addition, functions during the early stages of wound repair to stabilize the lesion and guide cell migration during re-epithelialization. Was originally thought to be essential for platelet aggregation, based on in vitro studies using anticoagulated blood. However subsequent studies have shown that it is not absolutely required for thrombus formation in vivo. Enhances expression of SELP in activated platelets. Maternal fibrinogen is essential for successful pregnancy. Fibrin deposition is also associated with infection, where it protects against IFNG-mediated hemorrhage. May also facilitate the antibacterial immune response via both innate and T-cell mediated pathways. The protein is Fibrinogen beta chain (FGB) of Syncerus caffer (African buffalo).